Here is a 196-residue protein sequence, read N- to C-terminus: Peptidyl-tRNA hydrolase (196 aa).

Tyrosine 18 provides a ligand contact to tRNA. Histidine 23 acts as the Proton acceptor in catalysis. Phenylalanine 69, asparagine 71, and asparagine 117 together coordinate tRNA.

It belongs to the PTH family. As to quaternary structure, monomer.

The protein resides in the cytoplasm. The enzyme catalyses an N-acyl-L-alpha-aminoacyl-tRNA + H2O = an N-acyl-L-amino acid + a tRNA + H(+). Functionally, hydrolyzes ribosome-free peptidyl-tRNAs (with 1 or more amino acids incorporated), which drop off the ribosome during protein synthesis, or as a result of ribosome stalling. In terms of biological role, catalyzes the release of premature peptidyl moieties from peptidyl-tRNA molecules trapped in stalled 50S ribosomal subunits, and thus maintains levels of free tRNAs and 50S ribosomes. The sequence is that of Peptidyl-tRNA hydrolase from Vibrio cholerae serotype O1 (strain ATCC 39315 / El Tor Inaba N16961).